The primary structure comprises 257 residues: MPASMFSIDNILAARPRCKDSVLPVAHSAAAPVVFPALHGDSLYGASGGASSDYGAFYPRPVAPGGAGLPAAVSGSRLGYNNYFYGQLHVQAAPVGPACCGAVPPLGAQQCSCVPTPPGYEGPGSVLVSPVPHQMLPYMNVGTLSRTELQLLNQLHCRRKRRHRTIFTDEQLEALENLFQETKYPDVGTREQLARKVHLREEKVEVWFKNRRAKWRRQKRSSSEESENAEKWNKTSSSKASPEKREEEGKSDLDSDS.

Positions 160-219 (KRRHRTIFTDEQLEALENLFQETKYPDVGTREQLARKVHLREEKVEVWFKNRRAKWRRQK) form a DNA-binding region, homeobox. The segment at 213-257 (AKWRRQKRSSSEESENAEKWNKTSSSKASPEKREEEGKSDLDSDS) is disordered. The segment covering 241 to 257 (SPEKREEEGKSDLDSDS) has biased composition (basic and acidic residues).

This sequence belongs to the paired homeobox family. Bicoid subfamily.

The protein localises to the nucleus. Functionally, regulates chordin (CHRD). May play a role in spatial programing within discrete embryonic fields or lineage compartments during organogenesis. In concert with NKX3-2, plays a role in defining the structural components of the middle ear; required for the development of the entire tympanic ring. Probably involved in the regulatory networks that define neural crest cell fate specification and determine mesoderm cell lineages in mammals. The chain is Homeobox protein goosecoid (GSC) from Homo sapiens (Human).